Reading from the N-terminus, the 887-residue chain is Oxysterol-binding protein-related protein 3 (887 aa).

A disordered region spans residues Met-1–Trp-35. Residues Ser-16 and Ser-34 each carry the phosphoserine modification. Residues Ser-16 to Gln-32 show a composition bias toward low complexity. The region spanning Pro-51–Met-146 is the PH domain. Residues His-161 to Thr-167 carry the FFAT 1 motif. Phosphoserine occurs at positions 200, 251, and 265. The interval Gly-261–Ser-326 is disordered. Residues Lys-268–Ala-280 show a composition bias toward basic residues. Phosphoserine is present on residues Ser-304, Ser-309, Ser-320, Ser-323, Ser-371, Ser-372, Ser-410, Ser-425, Ser-437, and Ser-440. The short motif at Glu-450–Ala-454 is the FFAT 2 element.

Belongs to the OSBP family. Homodimer. Interacts with RRAS. Interacts (phosphorylated form) with VAPA. Interacts with OSBPL6. Post-translationally, phosphorylation is enhanced in vitro by phorbol-12-myristate-13-acetate (PMA), forskolin and calcium ionophore A23187. Phosphorylation seems to be stimulated in conditions of low cell-cell (or cell-matrix) adhesion. Expressed in a subset of small lymphocytes (at protein level). Expressed at high concentration in kidney, lymph node and thymus. Expressed at moderate concentration in stomach, jejunum, ileum, appendix, spleen, leukocytes, trachea, lung and thyroid gland. Expressed at low concentration in whole brain, esophagus, duodenum, ileocecum, colon, skeletal muscle, bone marrow, placenta and mammary gland. Isoform 1a, isoform 1b, isoform 1c and isoform 1d are highly expressed in brain, bone marrow, colon, kidney, lung, skeletal muscle, spleen, thymus and thyroid. Not expressed in heart and liver. Isoform 2a, isoform 2b, isoform 2c and isoform 2d are expressed in brain, bone marrow, kidney, skeletal muscle, spleen, thymus and thyroid. Not expressed in heart, liver and lung.

It localises to the endoplasmic reticulum membrane. The protein localises to the cytoplasm. It is found in the cytosol. Its subcellular location is the cell membrane. The protein resides in the cell projection. It localises to the filopodium tip. The protein localises to the nucleus membrane. In terms of biological role, phosphoinositide-binding protein which associates with both cell and endoplasmic reticulum (ER) membranes. Can bind to the ER membrane protein VAPA and recruit VAPA to plasma membrane sites, thus linking these intracellular compartments. The ORP3-VAPA complex stimulates RRAS signaling which in turn attenuates integrin beta-1 (ITGB1) activation at the cell surface. With VAPA, may regulate ER morphology. Has a role in regulation of the actin cytoskeleton, cell polarity and cell adhesion. Binds to phosphoinositides with preference for PI(3,4)P2 and PI(3,4,5)P3. Also binds 25-hydroxycholesterol and cholesterol. The protein is Oxysterol-binding protein-related protein 3 (OSBPL3) of Homo sapiens (Human).